A 572-amino-acid chain; its full sequence is Bilirubin oxidase (572 aa).

Positions 1 to 19 are cleaved as a signal peptide; sequence MFKHTLGAAALSLLFNSNA. Positions 20–38 are excised as a propeptide; sequence VQASPVPETSPATGHLFKR. Plastocyanin-like domains follow at residues 98 to 194 and 404 to 526; these read VGYD…YMLT and VAFA…VFVD. Residues His-132, His-134, His-172, His-174, His-436, His-439, His-441, His-494, Cys-495, His-496, His-500, and Met-505 each coordinate Cu cation. 2 N-linked (GlcNAc...) asparagine glycosylation sites follow: Asn-510 and Asn-520.

It belongs to the multicopper oxidase family. Cu cation is required as a cofactor.

It catalyses the reaction 2 (4Z,15Z)-bilirubin IXalpha + O2 = 2 biliverdin IXalpha + 2 H2O. Oxidation of bilirubin and other tetrapyrroles. The sequence is that of Bilirubin oxidase from Albifimbria verrucaria (Myrothecium leaf spot and pod blight fungus).